Here is a 237-residue protein sequence, read N- to C-terminus: Ribonuclease PH (237 aa).

Phosphate is bound by residues Arg86 and 124-126 (GTR).

Belongs to the RNase PH family. As to quaternary structure, homohexameric ring arranged as a trimer of dimers.

It carries out the reaction tRNA(n+1) + phosphate = tRNA(n) + a ribonucleoside 5'-diphosphate. In terms of biological role, phosphorolytic 3'-5' exoribonuclease that plays an important role in tRNA 3'-end maturation. Removes nucleotide residues following the 3'-CCA terminus of tRNAs; can also add nucleotides to the ends of RNA molecules by using nucleoside diphosphates as substrates, but this may not be physiologically important. Probably plays a role in initiation of 16S rRNA degradation (leading to ribosome degradation) during starvation. This chain is Ribonuclease PH, found in Shewanella oneidensis (strain ATCC 700550 / JCM 31522 / CIP 106686 / LMG 19005 / NCIMB 14063 / MR-1).